An 84-amino-acid polypeptide reads, in one-letter code: Envelope small membrane protein (84 aa).

Residues 1 to 18 (MFMADAYLADTVWYVGQI) are Virion surface-facing. The helical transmembrane segment at 19–39 (IFIVAICLLVTIVVVAFLATF) threads the bilayer. Residues 40–80 (KLCIQLCGMCNTLVLSPSIYVFNRGRQFYEFYNDVKPPVLD) lie on the Intravirion side of the membrane.

This sequence belongs to the betacoronaviruses E protein family. As to quaternary structure, homopentamer. Interacts with membrane protein M in the budding compartment of the host cell, which is located between endoplasmic reticulum and the Golgi complex. Interacts with Nucleoprotein.

The protein resides in the host Golgi apparatus membrane. Its function is as follows. Plays a central role in virus morphogenesis and assembly. Acts as a viroporin and self-assembles in host membranes forming pentameric protein-lipid pores that allow ion transport. Also plays a role in the induction of apoptosis. The protein is Envelope small membrane protein of Human coronavirus OC43 (HCoV-OC43).